The sequence spans 51 residues: Insulin (51 aa).

Disulfide bonds link C7–C37, C19–C50, and C36–C41.

This sequence belongs to the insulin family. In terms of assembly, heterodimer of a B chain and an A chain linked by two disulfide bonds.

It localises to the secreted. Insulin decreases blood glucose concentration. It increases cell permeability to monosaccharides, amino acids and fatty acids. It accelerates glycolysis, the pentose phosphate cycle, and glycogen synthesis in liver. This chain is Insulin (INS), found in Anser anser anser (Western greylag goose).